The primary structure comprises 303 residues: N-acetyl-D-glucosamine kinase (303 aa).

ATP-binding positions include 4–11 and 133–140; these read GFDIGGTK and GVGGGLIF. Zn(2+)-binding residues include His157, Cys177, Cys179, and Cys184.

This sequence belongs to the ROK (NagC/XylR) family. NagK subfamily.

The enzyme catalyses N-acetyl-D-glucosamine + ATP = N-acetyl-D-glucosamine 6-phosphate + ADP + H(+). Its pathway is cell wall biogenesis; peptidoglycan recycling. Functionally, catalyzes the phosphorylation of N-acetyl-D-glucosamine (GlcNAc) derived from cell-wall degradation, yielding GlcNAc-6-P. This chain is N-acetyl-D-glucosamine kinase, found in Escherichia coli O6:H1 (strain CFT073 / ATCC 700928 / UPEC).